The following is a 162-amino-acid chain: Regulatory protein RecX (162 aa).

It belongs to the RecX family.

The protein localises to the cytoplasm. In terms of biological role, modulates RecA activity. This is Regulatory protein RecX from Xanthomonas campestris pv. campestris (strain 8004).